The chain runs to 206 residues: Ribonuclease HII (206 aa).

The RNase H type-2 domain occupies 18-206 (LRIAGVDEVG…PVHNILYQEK (189 aa)). A divalent metal cation contacts are provided by D24, E25, and D115.

It belongs to the RNase HII family. Mn(2+) is required as a cofactor. The cofactor is Mg(2+).

It is found in the cytoplasm. It catalyses the reaction Endonucleolytic cleavage to 5'-phosphomonoester.. In terms of biological role, endonuclease that specifically degrades the RNA of RNA-DNA hybrids. The protein is Ribonuclease HII of Dinoroseobacter shibae (strain DSM 16493 / NCIMB 14021 / DFL 12).